The chain runs to 437 residues: ATP-dependent protease ATPase subunit HslU (437 aa).

ATP is bound by residues V18, 60–65 (GVGKTE), D249, E315, and R387.

Belongs to the ClpX chaperone family. HslU subfamily. In terms of assembly, a double ring-shaped homohexamer of HslV is capped on each side by a ring-shaped HslU homohexamer. The assembly of the HslU/HslV complex is dependent on binding of ATP.

The protein resides in the cytoplasm. Functionally, ATPase subunit of a proteasome-like degradation complex; this subunit has chaperone activity. The binding of ATP and its subsequent hydrolysis by HslU are essential for unfolding of protein substrates subsequently hydrolyzed by HslV. HslU recognizes the N-terminal part of its protein substrates and unfolds these before they are guided to HslV for hydrolysis. This is ATP-dependent protease ATPase subunit HslU from Rhodospirillum centenum (strain ATCC 51521 / SW).